The chain runs to 257 residues: Glucose-1-phosphate cytidylyltransferase (257 aa).

Residues 6 to 10 (LAGGL), 11 to 13 (GTR), Lys23, Ser104, Arg109, and Gly128 contribute to the substrate site. Mg(2+)-binding residues include Asp129 and Asp234.

It belongs to the glucose-1-phosphate cytidylyltransferase family. Homohexamer. Mg(2+) is required as a cofactor.

It carries out the reaction alpha-D-glucose 1-phosphate + CTP + H(+) = CDP-D-glucose + diphosphate. Its pathway is nucleotide-sugar biosynthesis; CDP-3,6-dideoxy-D-mannose biosynthesis; CDP-3,6-dideoxy-D-mannose from CTP and alpha-D-glucose 1-phosphate: step 1/5. It participates in bacterial outer membrane biogenesis; LPS O-antigen biosynthesis. Functionally, involved in the biosynthesis of the tyvelose, a 3,6-dideoxyhexose found in the O-antigen of the surface lipopolysaccharides. It catalyzes the transfer of a CMP moiety from CTP to glucose 1-phosphate. This enzyme can utilize either CTP or UTP as the nucleotide donor. This Salmonella typhi protein is Glucose-1-phosphate cytidylyltransferase (rfbF).